Here is a 117-residue protein sequence, read N- to C-terminus: Large ribosomal subunit protein uL18 (117 aa).

Belongs to the universal ribosomal protein uL18 family. In terms of assembly, part of the 50S ribosomal subunit; part of the 5S rRNA/L5/L18/L25 subcomplex. Contacts the 5S and 23S rRNAs.

Its function is as follows. This is one of the proteins that bind and probably mediate the attachment of the 5S RNA into the large ribosomal subunit, where it forms part of the central protuberance. The protein is Large ribosomal subunit protein uL18 of Thiobacillus denitrificans (strain ATCC 25259 / T1).